Reading from the N-terminus, the 552-residue chain is Carotenoid cleavage dioxygenase 8 homolog A, chloroplastic (552 aa).

A chloroplast-targeting transit peptide spans 1 to 43 (MATSLTLIATPCTAPRSSSSFALAPRLPPRCSNATAARRRAVR). The disordered stretch occupies residues 32–73 (SNATAARRRAVRATTLQSDQEPAGSGDSGATTTKLSASTSVR). Residues 59–72 (SGATTTKLSASTSV) are compositionally biased toward polar residues. Residues H239, H289, H356, and H543 each coordinate Fe cation.

Belongs to the carotenoid oxygenase family. It depends on Fe(2+) as a cofactor. As to expression, highly expressed in panicles, inflorescences and parenchyma cells of the root stele, and at lower levels in shoot apex, leaf buds and xylem parenchyma cells of the stem.

It is found in the plastid. The protein localises to the chloroplast. In terms of biological role, may be involved in strigolactones biosynthesis. The sequence is that of Carotenoid cleavage dioxygenase 8 homolog A, chloroplastic (CCD8A) from Oryza sativa subsp. japonica (Rice).